The primary structure comprises 105 residues: MHLFIGVSLRPLGHGIPAPYAVEDICTAKPRDIPVNPICIYRNPEKKPQERRGAGAGEGQDPGVHKPPASGSCPGPTRAFGRRSFLQAPGPTPRTMRRTSSCRPS.

The N-terminal stretch at 1–17 (MHLFIGVSLRPLGHGIP) is a signal peptide. Positions 38 to 105 (ICIYRNPEKK…MRRTSSCRPS (68 aa)) are disordered. Residues 43 to 53 (NPEKKPQERRG) show a composition bias toward basic and acidic residues.

The protein belongs to the serpin family. Forms protease inhibiting heterodimer with TMPRSS7. In terms of tissue distribution, plasma.

It localises to the secreted. The protein localises to the extracellular space. Most important serine protease inhibitor in plasma that regulates the blood coagulation cascade. AT-III inhibits thrombin, matriptase-3/TMPRSS7, as well as factors IXa, Xa and XIa. Its inhibitory activity is greatly enhanced in the presence of heparin. The protein is Antithrombin-III (SERPINC1) of Gallus gallus (Chicken).